The primary structure comprises 328 residues: uncharacterized protein (328 aa).

The first 32 residues, 1–32 (MFNFRLFSRRGKSLGLLAIVLLLFGFYSLKSS), serve as a signal peptide directing secretion.

This sequence belongs to the glycosyltransferase 34 family.

The protein localises to the endoplasmic reticulum. This is an uncharacterized protein from Schizosaccharomyces pombe (strain 972 / ATCC 24843) (Fission yeast).